The sequence spans 83 residues: Small ribosomal subunit protein bS16 (83 aa).

This sequence belongs to the bacterial ribosomal protein bS16 family.

In Borrelia duttonii (strain Ly), this protein is Small ribosomal subunit protein bS16.